The sequence spans 281 residues: Apolipoprotein E (281 aa).

Positions 1–18 (MKVLWAALLIALLAGCQG) are cleaved as a signal peptide. Tandem repeats lie at residues 82–103 (ALMD…EQLS), 104–125 (PVAE…ARLG), 126–147 (ADME…AMLG), 148–169 (QSTD…TVSY), and 198–219 (TRME…EQVE). The tract at residues 82–219 (ALMDETMKEL…RLDEVKEQVE (138 aa)) is 5 X 22 AA approximate tandem repeats. At M145 the chain carries Methionine sulfoxide. Phosphoserine is present on S149. The interval 160-170 (HLRKLRTVSYT) is LDL and other lipoprotein receptors binding. Heparin-binding positions include 164–167 (LRTV) and 193–200 (GERLRTRM). A homooligomerization region spans residues 230–281 (QQMRLQAEAFQARLKSWFEPLVEDMQRQWAGLVEKVQAAVGASAAPVPSDNH). The interval 242–254 (RLKSWFEPLVEDM) is specificity for association with VLDL.

It belongs to the apolipoprotein A1/A4/E family. As to quaternary structure, homotetramer. May interact with ABCA1; functionally associated with ABCA1 in the biogenesis of HDLs. May interact with APP/A4 amyloid-beta peptide; the interaction is extremely stable in vitro but its physiological significance is unclear. May interact with MAPT. May interact with MAP2. In the cerebrospinal fluid, interacts with secreted SORL1. Interacts with PMEL; this allows the loading of PMEL luminal fragment on ILVs to induce fibril nucleation. Post-translationally, APOE exists as multiple glycosylated and sialylated glycoforms within cells and in plasma. The extent of glycosylation and sialylation are tissue and context specific. Glycated in plasma VLDL. In terms of processing, phosphorylated by FAM20C in the extracellular medium.

It is found in the secreted. The protein resides in the extracellular space. It localises to the extracellular matrix. Its subcellular location is the extracellular vesicle. The protein localises to the endosome. It is found in the multivesicular body. Its function is as follows. APOE is an apolipoprotein, a protein associating with lipid particles, that mainly functions in lipoprotein-mediated lipid transport between organs via the plasma and interstitial fluids. APOE is a core component of plasma lipoproteins and is involved in their production, conversion and clearance. Apolipoproteins are amphipathic molecules that interact both with lipids of the lipoprotein particle core and the aqueous environment of the plasma. As such, APOE associates with chylomicrons, chylomicron remnants, very low density lipoproteins (VLDL) and intermediate density lipoproteins (IDL) but shows a preferential binding to high-density lipoproteins (HDL). It also binds a wide range of cellular receptors including the LDL receptor/LDLR, the LDL receptor-related proteins LRP1, LRP2 and LRP8 and the very low-density lipoprotein receptor/VLDLR that mediate the cellular uptake of the APOE-containing lipoprotein particles. Finally, APOE also has a heparin-binding activity and binds heparan-sulfate proteoglycans on the surface of cells, a property that supports the capture and the receptor-mediated uptake of APOE-containing lipoproteins by cells. A main function of APOE is to mediate lipoprotein clearance through the uptake of chylomicrons, VLDLs, and HDLs by hepatocytes. APOE is also involved in the biosynthesis by the liver of VLDLs as well as their uptake by peripheral tissues ensuring the delivery of triglycerides and energy storage in muscle, heart and adipose tissues. By participating in the lipoprotein-mediated distribution of lipids among tissues, APOE plays a critical role in plasma and tissues lipid homeostasis. APOE is also involved in two steps of reverse cholesterol transport, the HDLs-mediated transport of cholesterol from peripheral tissues to the liver, and thereby plays an important role in cholesterol homeostasis. First, it is functionally associated with ABCA1 in the biogenesis of HDLs in tissues. Second, it is enriched in circulating HDLs and mediates their uptake by hepatocytes. APOE also plays an important role in lipid transport in the central nervous system, regulating neuron survival and sprouting. The protein is Apolipoprotein E (APOE) of Aotus nancymaae (Ma's night monkey).